The following is a 287-amino-acid chain: Probable glucose uptake protein GlcU (287 aa).

The next 9 membrane-spanning stretches (helical) occupy residues 7–29 (LIAL…VGGG), 34–56 (IRGT…FAKF), 58–75 (NPTV…WAFG), 114–136 (WSSM…GVAL), 156–178 (MGIL…IFGV), 183–202 (ALFF…SMNH), 209–228 (TALN…FMFY), 233–255 (VGVA…GGIF), and 267–286 (TGIW…LGNL).

It belongs to the GRP transporter (TC 2.A.7.5) family.

The protein localises to the cell membrane. Its function is as follows. Involved in the uptake of glucose. The sequence is that of Probable glucose uptake protein GlcU (glcU) from Staphylococcus aureus (strain MRSA252).